Here is a 62-residue protein sequence, read N- to C-terminus: Teretoxin Tsu1.1 (62 aa).

The first 21 residues, 1–21 (MSCFPVLFVMMLLASQSVWAF), serve as a signal peptide directing secretion. A propeptide spanning residues 22 to 40 (PEPETRIGTARDAESMGVR) is cleaved from the precursor.

It belongs to the teretoxin A (TA) superfamily. In terms of processing, contains 2 disulfide bonds. In terms of tissue distribution, expressed by the venom duct.

The protein localises to the secreted. This Terebra subulata (Chocolate spotted auger) protein is Teretoxin Tsu1.1.